Consider the following 189-residue polypeptide: Peptidyl-tRNA hydrolase (189 aa).

Tyr-16 is a tRNA binding site. His-21 serves as the catalytic Proton acceptor. 3 residues coordinate tRNA: Phe-67, Asn-69, and Asn-115.

The protein belongs to the PTH family. Monomer.

The protein resides in the cytoplasm. It carries out the reaction an N-acyl-L-alpha-aminoacyl-tRNA + H2O = an N-acyl-L-amino acid + a tRNA + H(+). In terms of biological role, hydrolyzes ribosome-free peptidyl-tRNAs (with 1 or more amino acids incorporated), which drop off the ribosome during protein synthesis, or as a result of ribosome stalling. Its function is as follows. Catalyzes the release of premature peptidyl moieties from peptidyl-tRNA molecules trapped in stalled 50S ribosomal subunits, and thus maintains levels of free tRNAs and 50S ribosomes. This is Peptidyl-tRNA hydrolase from Legionella pneumophila (strain Corby).